Consider the following 679-residue polypeptide: PHD finger protein PERSISTENT TAPETAL CELL 1 (679 aa).

A PHD-type zinc finger spans residues 620-670 (VVDCACGAVDDDGERMACCDICEAWQHTRCAGIADTEDAPHVFLCSRCDND).

In terms of biological role, probable transcriptional activator required for tapetal programmed cell death (PCD) and degeneration, and pollen development in anthers. This chain is PHD finger protein PERSISTENT TAPETAL CELL 1, found in Oryza sativa subsp. japonica (Rice).